A 569-amino-acid chain; its full sequence is ABC1 family protein MCP2 (569 aa).

Residues 1–18 constitute a mitochondrion transit peptide; the sequence is MMTKAFFNKLPFEVFRRY. Topologically, residues 19-34 are mitochondrial matrix; sequence VRTGKSIPQRSPRTRK. The chain crosses the membrane as a helical span at residues 35-51; that stretch reads SLLVGGTIASAVVLYNF. The Mitochondrial intermembrane segment spans residues 52-569; it reads NDTFHDSVKH…KFIPKTWLSS (518 aa).

This sequence belongs to the protein kinase superfamily. ADCK protein kinase family.

It is found in the mitochondrion. Its subcellular location is the mitochondrion inner membrane. In terms of biological role, component of MIOREX complexes, large expressome-like assemblies of ribosomes with factors involved in all the steps of post-transcriptional gene expression. Involved in mitochondrial lipid homeostasis. This is ABC1 family protein MCP2 from Saccharomyces cerevisiae (strain ATCC 204508 / S288c) (Baker's yeast).